Consider the following 303-residue polypeptide: AP2-like ethylene-responsive transcription factor At1g79700 (303 aa).

Residues methionine 1–lysine 10 show a composition bias toward basic residues. The interval methionine 1–glycine 55 is disordered. The span at lysine 20–leucine 32 shows a compositional bias: polar residues. DNA-binding regions (AP2/ERF) lie at residues proline 52–proline 118 and lysine 154–aspartate 202. The tract at residues alanine 212–serine 259 is disordered. Basic and acidic residues predominate over residues aspartate 214 to glutamate 243.

This sequence belongs to the AP2/ERF transcription factor family. AP2 subfamily.

The protein resides in the nucleus. Functionally, probably acts as a transcriptional activator. Binds to the GCC-box pathogenesis-related promoter element. May be involved in the regulation of gene expression by stress factors and by components of stress signal transduction pathways. The protein is AP2-like ethylene-responsive transcription factor At1g79700 of Arabidopsis thaliana (Mouse-ear cress).